We begin with the raw amino-acid sequence, 427 residues long: Probable protein phosphatase 2C 64 (427 aa).

The interval 1 to 36 (MGNCVARSGTAVDAGGDGGEDGKRRRRRWKAPREDQ) is disordered. Residues 53 to 331 (TATVYTQQGR…DDCAVVCLYL (279 aa)) enclose the PPM-type phosphatase domain. The Mn(2+) site is built by Asp-89, Gly-90, Asp-276, and Asp-322.

It belongs to the PP2C family. It depends on Mg(2+) as a cofactor. Mn(2+) is required as a cofactor.

It catalyses the reaction O-phospho-L-seryl-[protein] + H2O = L-seryl-[protein] + phosphate. The catalysed reaction is O-phospho-L-threonyl-[protein] + H2O = L-threonyl-[protein] + phosphate. This chain is Probable protein phosphatase 2C 64, found in Oryza sativa subsp. japonica (Rice).